Here is a 185-residue protein sequence, read N- to C-terminus: MSSQGFMSKIALPYAEALVESASSASALDQINQDLSLISEILNQSQELKTFFYNPLITTEIKKNVVSSLFTNQVHSLVIRFLLVLIDRRRIALLDVIISKYLELVYQLQSTVIAEVLTPVLLTDVQQSALINKIKDMTNSKTVKLVITIKPMLIAGFIIKIGSKTIDTSLYGRLKHISAYLNAVS.

It belongs to the ATPase delta chain family. As to quaternary structure, F-type ATPases have 2 components, F(1) - the catalytic core - and F(0) - the membrane proton channel. F(1) has five subunits: alpha(3), beta(3), gamma(1), delta(1), epsilon(1). CF(0) has four main subunits: a(1), b(1), b'(1) and c(10-14). The alpha and beta chains form an alternating ring which encloses part of the gamma chain. F(1) is attached to F(0) by a central stalk formed by the gamma and epsilon chains, while a peripheral stalk is formed by the delta, b and b' chains.

It is found in the plastid. The protein resides in the chloroplast thylakoid membrane. In terms of biological role, f(1)F(0) ATP synthase produces ATP from ADP in the presence of a proton or sodium gradient. F-type ATPases consist of two structural domains, F(1) containing the extramembraneous catalytic core and F(0) containing the membrane proton channel, linked together by a central stalk and a peripheral stalk. During catalysis, ATP synthesis in the catalytic domain of F(1) is coupled via a rotary mechanism of the central stalk subunits to proton translocation. Functionally, this protein is part of the stalk that links CF(0) to CF(1). It either transmits conformational changes from CF(0) to CF(1) or is implicated in proton conduction. The protein is ATP synthase subunit delta, chloroplastic of Gracilaria tenuistipitata var. liui (Red alga).